Reading from the N-terminus, the 796-residue chain is MKHSLNTATSSSSVLKRTILYLVLISLAALVYCDDDYYDLLGVSKAATNREIRQAFKKLALKLHPDKNKDPDAHNKFLKINRAYEVLKDEDLRKKYDKYGEKGLDEQNQGGGYQSWSYYRYDFGIYDDDLEIITLDRGEFDGAVNSGELWFINFYSPGCSHCHDLAPTWRQFAKEMDGLLRIGAVNCGDNRMLCRSQGINSYPNLYIFKSGMNPVKYYGERSKERLVNFAMPYISSTVTELWAGNFRSSIEDAFSSGVGWLITFCSDTGDCLNSQTRSKLAGLLEGLVKVGWMDCATQGDLCDNLEITSSATVYFPPGSTLTDKENGDVLFLNSLDAREIYKEVLNHLPDLETISPESLQGKLSHHRWLLFFTFGTDEQSSLPEFKKLTVHLRSEHVQVGKFDCYSSPSICSELYIHKPCVAAFKGKGISAYEIHHGKVQLYDLVSFAKESVNSHVITLGPTNFPGKDRDTWLVDFFAPWCPPCRALLPELRIASKRLFGQIKFGTLDCTIHEGLCNMHNIRAYPTTVVFNHSNIHEYAGHNNAEEILEFIEDLRNPSVVTLTPETFQSLVRNRRGDEMWMVDFYAPWCGPCQALMPEWKRMARHINGLISVGSIDCQKYSLFCTQERVNGYPEIRLYPANINPQHTYYRYTGWHRDSQSLRNWALMYLPKASFDLTPESFHEHVINGKDNWVLDFYAPWCGPCQNFNPEFEILARAVKGKIKAGKVNCQAYEHLCNSASIRSYPTVRLYPYNGSKKKDYFGEQIDSRDAKEIAQIITKRIEAIKRVKEAYNKDEL.

An N-terminal signal peptide occupies residues 1–33 (MKHSLNTATSSSSVLKRTILYLVLISLAALVYC). The J domain occupies 36–100 (DYYDLLGVSK…DLRKKYDKYG (65 aa)). The Thioredoxin 1 domain occupies 131–233 (EIITLDRGEF…ERLVNFAMPY (103 aa)). Residues Cys159 and Cys162 are joined by a disulfide bond. Trxb stretches follow at residues 236–351 (STVT…LPDL) and 349–464 (PDLE…PTNF). 3 Thioredoxin domains span residues 455 to 554 (HVIT…IEDL), 558 to 668 (SVVT…ALMY), and 672 to 780 (ASFD…ITKR). A disulfide bridge connects residues Cys481 and Cys484. N-linked (GlcNAc...) asparagine glycosylation is present at Asn531. 2 disulfides stabilise this stretch: Cys589-Cys592 and Cys701-Cys704. An N-linked (GlcNAc...) asparagine glycan is attached at Asn753. A Prevents secretion from ER motif is present at residues 793-796 (KDEL).

The protein resides in the endoplasmic reticulum lumen. Functionally, endoplasmic reticulum disulfide reductase involved both in the correct folding of proteins and degradation of misfolded proteins. Required for efficient folding of proteins in the endoplasmic reticulum by catalyzing the removal of non-native disulfide bonds formed during the folding of proteins. Also involved in endoplasmic reticulum-associated degradation (ERAD) by reducing incorrect disulfide bonds in misfolded glycoproteins. The chain is DnaJ homolog subfamily C member 10 (dnajc10) from Xenopus laevis (African clawed frog).